The chain runs to 212 residues: Large ribosomal subunit protein uL3 (212 aa).

The residue at position 153 (Gln153) is an N5-methylglutamine.

The protein belongs to the universal ribosomal protein uL3 family. In terms of assembly, part of the 50S ribosomal subunit. Forms a cluster with proteins L14 and L19. Methylated by PrmB.

One of the primary rRNA binding proteins, it binds directly near the 3'-end of the 23S rRNA, where it nucleates assembly of the 50S subunit. The sequence is that of Large ribosomal subunit protein uL3 from Idiomarina loihiensis (strain ATCC BAA-735 / DSM 15497 / L2-TR).